Consider the following 117-residue polypeptide: uncharacterized protein (117 aa).

This is an uncharacterized protein from Fowlpox virus (strain NVSL) (FPV).